A 143-amino-acid polypeptide reads, in one-letter code: Large ribosomal subunit protein uL11 (143 aa).

It belongs to the universal ribosomal protein uL11 family. Part of the ribosomal stalk of the 50S ribosomal subunit. Interacts with L10 and the large rRNA to form the base of the stalk. L10 forms an elongated spine to which L12 dimers bind in a sequential fashion forming a multimeric L10(L12)X complex. One or more lysine residues are methylated.

Its function is as follows. Forms part of the ribosomal stalk which helps the ribosome interact with GTP-bound translation factors. The polypeptide is Large ribosomal subunit protein uL11 (Laribacter hongkongensis (strain HLHK9)).